The following is an 895-amino-acid chain: Serine-rich coiled-coil domain-containing protein 1 (895 aa).

4 disordered regions span residues 1-142 (MGDS…KEPS), 154-177 (SGRS…KQST), 332-394 (ELHS…RTLG), and 459-497 (RSSS…SSKM). Residues 43 to 56 (SSSPSSTNSSSGST) are compositionally biased toward low complexity. The span at 83–102 (TEQNLSISNGAQPSHSNMQK) shows a compositional bias: polar residues. The segment covering 131 to 142 (LTEDFEREKEPS) has biased composition (basic and acidic residues). Residues 348–358 (SLQSTELSVGN) are compositionally biased toward polar residues. Residues 675 to 705 (MLRLQLKDRDELISQLQAELEKVQHLQKAFA) adopt a coiled-coil conformation. Residues 731–753 (QGGRETTHRNRTMSQSHSTRDRK) are disordered.

Belongs to the CCSER family.

This chain is Serine-rich coiled-coil domain-containing protein 1 (Ccser1), found in Mus musculus (Mouse).